We begin with the raw amino-acid sequence, 209 residues long: ADP-ribose pyrophosphatase (209 aa).

Residues 28-29 (FF), 51-52 (RE), arginine 56, and arginine 79 each bind substrate. One can recognise a Nudix hydrolase domain in the interval 55–193 (ERGHAAVLLP…KIDNAASVIA (139 aa)). Alanine 96 contributes to the Mg(2+) binding site. A Nudix box motif is present at residues 97-118 (GMIEEGESVEDVARREAIEEAG). A substrate-binding site is contributed by methionine 98. 2 residues coordinate Mg(2+): glutamate 112 and glutamate 116. Substrate is bound by residues 133–135 (SPG) and glutamate 139. Glutamate 162 functions as the Proton acceptor in the catalytic mechanism. A Mg(2+)-binding site is contributed by glutamate 164.

It belongs to the Nudix hydrolase family. NudF subfamily. In terms of assembly, homodimer. Requires Mg(2+) as cofactor.

The catalysed reaction is ADP-D-ribose + H2O = D-ribose 5-phosphate + AMP + 2 H(+). Its activity is regulated as follows. Inhibited by phosphorylated compounds such as AMP, ADP, ATP, 3-phosphoglyceric acid and PPi. Not inhibited by orthophosphate. Activity is high in cells grown in low glucose concentrations and decreases dramatically as glucose concentration increases. In terms of biological role, acts on ADP-mannose and ADP-glucose as well as ADP-ribose. Prevents glycogen biosynthesis. The reaction catalyzed by this enzyme is a limiting step of the gluconeogenic process. The chain is ADP-ribose pyrophosphatase (nudF) from Escherichia coli O157:H7.